The following is a 338-amino-acid chain: Glutamyl-tRNA reductase (338 aa).

Substrate contacts are provided by residues 50–53 (TCHR), Ser102, 107–109 (ETE), and Gln113. Cys51 serves as the catalytic Nucleophile. Residue 181-186 (GYSEIN) coordinates NADP(+).

The protein belongs to the glutamyl-tRNA reductase family. Homodimer.

The catalysed reaction is (S)-4-amino-5-oxopentanoate + tRNA(Glu) + NADP(+) = L-glutamyl-tRNA(Glu) + NADPH + H(+). Its pathway is porphyrin-containing compound metabolism; protoporphyrin-IX biosynthesis; 5-aminolevulinate from L-glutamyl-tRNA(Glu): step 1/2. Catalyzes the NADPH-dependent reduction of glutamyl-tRNA(Glu) to glutamate 1-semialdehyde (GSA). The chain is Glutamyl-tRNA reductase from Chlamydia abortus (strain DSM 27085 / S26/3) (Chlamydophila abortus).